The chain runs to 188 residues: Mitochondrial import receptor subunit TOM20 homolog (188 aa).

The Mitochondrial intermembrane segment spans residues 1 to 12 (MSDTILGFNKSN). The chain crosses the membrane as a helical span at residues 13–31 (VVLAAGIAGAAFLGYCIYF). The Cytoplasmic segment spans residues 32-188 (DHKRINAPDY…ELIDDTDDLE (157 aa)). Disordered regions lie at residues 42-73 (KDKI…AAPD) and 156-188 (DEAE…DDLE). Low complexity predominate over residues 58–67 (MAPRRPAAAG).

This sequence belongs to the Tom20 family. As to quaternary structure, forms part of the preprotein translocase complex of the outer mitochondrial membrane (TOM complex).

The protein resides in the mitochondrion outer membrane. In terms of biological role, central component of the receptor complex responsible for the recognition and translocation of cytosolically synthesized mitochondrial preproteins. Together with tomm-22 functions as the transit peptide receptor at the surface of the mitochondrion outer membrane and facilitates the movement of preproteins into the translocation pore. The chain is Mitochondrial import receptor subunit TOM20 homolog from Caenorhabditis elegans.